The sequence spans 657 residues: Probable potassium transport system protein Kup 1 (657 aa).

Transmembrane regions (helical) follow at residues 40 to 60, 88 to 108, 135 to 155, 172 to 192, 198 to 218, 241 to 261, 282 to 302, 320 to 340, 380 to 400, 402 to 422, 432 to 452, and 454 to 474; these read VTSG…GDIG, VLSL…VLLL, WFLL…SMIT, PALE…LFAV, ALVA…IAVM, FLLS…LAVT, WMFF…ALVL, LVLP…QAVI, LLLI…NLAS, YGIA…VVIW, AAAV…ANLL, and LLEG…TIWT.

It belongs to the HAK/KUP transporter (TC 2.A.72) family.

It is found in the cell inner membrane. The catalysed reaction is K(+)(in) + H(+)(in) = K(+)(out) + H(+)(out). Functionally, transport of potassium into the cell. Likely operates as a K(+):H(+) symporter. This is Probable potassium transport system protein Kup 1 from Bradyrhizobium diazoefficiens (strain JCM 10833 / BCRC 13528 / IAM 13628 / NBRC 14792 / USDA 110).